The primary structure comprises 772 residues: Mitochondrial intermediate peptidase (772 aa).

A mitochondrion-targeting transit peptide spans 1–37 (MLRTIILKAGSNASIPSLSRQNKLLRFFATAGAVSRT). Residue His558 participates in Zn(2+) binding. The active site involves Glu559. Residues His562 and His565 each contribute to the Zn(2+) site.

It belongs to the peptidase M3 family. The cofactor is Zn(2+).

It localises to the mitochondrion matrix. It carries out the reaction Release of an N-terminal octapeptide as second stage of processing of some proteins imported into the mitochondrion.. With respect to regulation, stimulated by Fe(2+). Functionally, cleaves proteins, imported into the mitochondrion, to their mature size. While most mitochondrial precursor proteins are processed to the mature form in one step by mitochondrial processing peptidase (MPP), the sequential cleavage by MIP of an octapeptide after initial processing by MPP is a required step for a subgroup of nuclear-encoded precursor proteins destined for the matrix or the inner membrane. Cleaves precursor proteins of respiratory components, including subunits of the electron transport chain and tricarboxylic acid cycle enzymes, and components of the mitochondrial genetic machinery, including ribosomal proteins, translation factors, and proteins required for mitochondrial DNA metabolism. The sequence is that of Mitochondrial intermediate peptidase (OCT1) from Saccharomyces cerevisiae (strain YJM789) (Baker's yeast).